The primary structure comprises 82 residues: MAHSVKIYDTCIGCTQCVRACPTDVLEMVPWKGNNKAGMIAAAPRTEDCVGCKRCETACPTDFLSIRVYLGPETTRSMGLAY.

2 4Fe-4S ferredoxin-type domains span residues 2–31 and 40–69; these read AHSV…MVPW and IAAA…IRVY. [4Fe-4S] cluster is bound by residues Cys11, Cys14, Cys17, Cys21, Cys49, Cys52, Cys55, and Cys59.

The cyanobacterial PSI reaction center is composed of one copy each of PsaA,B,C,D,E,F,I,J,K,L,M and X, and forms trimeric complexes. The cofactor is [4Fe-4S] cluster.

The protein localises to the cellular thylakoid membrane. The enzyme catalyses reduced [plastocyanin] + hnu + oxidized [2Fe-2S]-[ferredoxin] = oxidized [plastocyanin] + reduced [2Fe-2S]-[ferredoxin]. Its function is as follows. Apoprotein for the two 4Fe-4S centers FA and FB of photosystem I (PSI); essential for photochemical activity. FB is the terminal electron acceptor of PSI, donating electrons to ferredoxin. The C-terminus interacts with PsaA/B/D and helps assemble the protein into the PSI complex. Required for binding of PsaD and PsaE to PSI. PSI is a plastocyanin/cytochrome c6-ferredoxin oxidoreductase, converting photonic excitation into a charge separation, which transfers an electron from the donor P700 chlorophyll pair to the spectroscopically characterized acceptors A0, A1, FX, FA and FB in turn. The protein is Photosystem I iron-sulfur center of Synechococcus sp. (strain JA-2-3B'a(2-13)) (Cyanobacteria bacterium Yellowstone B-Prime).